Reading from the N-terminus, the 49-residue chain is Toxic protein HokB (49 aa).

The chain crosses the membrane as a helical span at residues 4-24 (NPLVVCLLIICITILTFTLLT).

This sequence belongs to the Hok/Gef family.

Its subcellular location is the cell inner membrane. In terms of biological role, toxic component of a type I toxin-antitoxin (TA) system. When overexpressed kills cells within minutes; causes collapse of the transmembrane potential and arrest of respiration. Expression leads to membrane depolarization; when protein levels are high enough depolarization probably leads to lowered metabolic activity which in turn induces some cells to enter the persistent state in which they transiently survive antibiotic exposure. Its toxic effect is probably neutralized by antisense antitoxin RNA SokB, which is encoded in trans on the opposite DNA strand. This is Toxic protein HokB from Escherichia coli (strain K12).